The primary structure comprises 377 residues: D-alanine--D-alanine ligase (377 aa).

One can recognise an ATP-grasp domain in the interval 140–349 (KELLTVNGIR…NAKLVDMLID (210 aa)). 170–225 (VAELGNIVFVKAANQGSSVGISRVTNAEEYTEALSDSFQYDYKVLIEEAVNGAREL) contacts ATP. Mg(2+) is bound by residues D303, E316, and N318.

The protein belongs to the D-alanine--D-alanine ligase family. Mg(2+) is required as a cofactor. The cofactor is Mn(2+).

It is found in the cytoplasm. The enzyme catalyses 2 D-alanine + ATP = D-alanyl-D-alanine + ADP + phosphate + H(+). It participates in cell wall biogenesis; peptidoglycan biosynthesis. Its function is as follows. Cell wall formation. In Leuconostoc mesenteroides subsp. mesenteroides (strain ATCC 8293 / DSM 20343 / BCRC 11652 / CCM 1803 / JCM 6124 / NCDO 523 / NBRC 100496 / NCIMB 8023 / NCTC 12954 / NRRL B-1118 / 37Y), this protein is D-alanine--D-alanine ligase.